The following is a 108-amino-acid chain: Nucleoid-associated protein Csal_1459 (108 aa).

Residues 84 to 93 (EETSRGRMEE) are compositionally biased toward basic and acidic residues. The segment at 84-108 (EETSRGRMEEATEGMNLPPGFKMPF) is disordered.

It belongs to the YbaB/EbfC family. In terms of assembly, homodimer.

Its subcellular location is the cytoplasm. The protein localises to the nucleoid. Binds to DNA and alters its conformation. May be involved in regulation of gene expression, nucleoid organization and DNA protection. This Chromohalobacter salexigens (strain ATCC BAA-138 / DSM 3043 / CIP 106854 / NCIMB 13768 / 1H11) protein is Nucleoid-associated protein Csal_1459.